Here is a 216-residue protein sequence, read N- to C-terminus: uncharacterized protein (216 aa).

This is an uncharacterized protein from Treponema pallidum (strain Nichols).